A 670-amino-acid polypeptide reads, in one-letter code: Acetyl-coenzyme A synthetase (670 aa).

CoA-binding positions include 205-208 and T326; that span reads RRGK. ATP-binding positions include 402–404, 426–431, D517, R532, and R543; these read GEP and STWWMT. 3 residues coordinate Mg(2+): V554, H556, and V559. R601 is a binding site for CoA. At K626 the chain carries N6-acetyllysine.

The protein belongs to the ATP-dependent AMP-binding enzyme family. Mg(2+) is required as a cofactor. Post-translationally, acetylated. Deacetylation by the SIR2-homolog deacetylase activates the enzyme.

It catalyses the reaction acetate + ATP + CoA = acetyl-CoA + AMP + diphosphate. Catalyzes the conversion of acetate into acetyl-CoA (AcCoA), an essential intermediate at the junction of anabolic and catabolic pathways. AcsA undergoes a two-step reaction. In the first half reaction, AcsA combines acetate with ATP to form acetyl-adenylate (AcAMP) intermediate. In the second half reaction, it can then transfer the acetyl group from AcAMP to the sulfhydryl group of CoA, forming the product AcCoA. The protein is Acetyl-coenzyme A synthetase of Pyrobaculum arsenaticum (strain DSM 13514 / JCM 11321 / PZ6).